The following is a 343-amino-acid chain: UDP-N-acetylglucosamine--N-acetylmuramyl-(pentapeptide) pyrophosphoryl-undecaprenol N-acetylglucosamine transferase (343 aa).

UDP-N-acetyl-alpha-D-glucosamine is bound by residues 10 to 12, Asn113, Ser174, and Gln275; that span reads TGG.

Belongs to the glycosyltransferase 28 family. MurG subfamily.

Its subcellular location is the cell membrane. The catalysed reaction is di-trans,octa-cis-undecaprenyl diphospho-N-acetyl-alpha-D-muramoyl-L-alanyl-D-glutamyl-meso-2,6-diaminopimeloyl-D-alanyl-D-alanine + UDP-N-acetyl-alpha-D-glucosamine = di-trans,octa-cis-undecaprenyl diphospho-[N-acetyl-alpha-D-glucosaminyl-(1-&gt;4)]-N-acetyl-alpha-D-muramoyl-L-alanyl-D-glutamyl-meso-2,6-diaminopimeloyl-D-alanyl-D-alanine + UDP + H(+). It participates in cell wall biogenesis; peptidoglycan biosynthesis. Functionally, cell wall formation. Catalyzes the transfer of a GlcNAc subunit on undecaprenyl-pyrophosphoryl-MurNAc-pentapeptide (lipid intermediate I) to form undecaprenyl-pyrophosphoryl-MurNAc-(pentapeptide)GlcNAc (lipid intermediate II). The polypeptide is UDP-N-acetylglucosamine--N-acetylmuramyl-(pentapeptide) pyrophosphoryl-undecaprenol N-acetylglucosamine transferase (Wolbachia sp. subsp. Drosophila simulans (strain wRi)).